The sequence spans 443 residues: Diels-Alderase poxQ (443 aa).

Residues 1–23 form the signal peptide; sequence MARIPLEFLSITLPVLLLAYCLA. N-linked (GlcNAc...) asparagine glycans are attached at residues N78, N97, and N145.

It belongs to the Diels-Alderase family.

Its pathway is secondary metabolite biosynthesis. Functionally, diels-Alderase; part of the gene cluster that mediates the biosynthesis of oxaleimides, cytotoxic compounds containing an unusual disubstituted succinimide moiety. The first step of the pathway is provided by the HR-PKS poxF that serves in a new mode of collaborative biosynthesis with the PKS-NRPS poxE, by providing the olefin containing amino acid substrate via the synthesis of an ACP-bound dec-4-enoate. The cytochrome P450 monooxygenase poxM-catalyzed oxidation at the alpha-position creates the enzyme-bound 2-hydroxydec-4-enoyl-ACP thioester, which may be prone to spontaneous hydrolysis to yield 2-hydroxydec-4-enoic acid due to increased electrophilicity of the carbonyl. 2-hydroxydec-4-enoic acid can then be further oxidized by poxM to yield the alpha-ketoacid 2-oxodec-4-enoicacid, which is reductively aminated by the aminotransferase poxL to yield (S,E)-2-aminodec-4-enoic acid. The Hybrid PKS-NRPS synthetase poxE then performs condensation between the octaketide product of its PKS modules and the amino group of (S,E)-2-aminodec-4-enoic acid which is activated and incorporated by the adenylation domain. The resulting aminoacyl product can be cyclized by the Diels-Alderase PoxQ and reductively released by the reductive (R) domain of poxE to yield an aldehyde intermediate. The released aldehyde is then substrate for a Knoevenagel condensation by the hydrolyase poxO followed by an oxidation at the 5-position of the pyrrolidone ring. The presence of the olefin from the amino acid building block allows for migration of the substituted allyl group to occur. This allylic transposition reaction takes place in a conjugate addition, semipinacol-like fashion to yield a succinimide intermediate. Iterative two-electron oxidations of the C7 methyl of the succinimide intermediate to the carboxylic acid can be catalyzed by one of two remaining cytochrome P450 monooxygenasess poxC or poxD to yield oxaleimide A. Subsequent oxidation yields the maleimide scaffold oxaleimide I. Both oxaleimide A and oxaleimide I can undergo oxidative modifications in the decalin ring to yield the series of products oxaleimides B to H. The protein is Diels-Alderase poxQ of Penicillium oxalicum (strain 114-2 / CGMCC 5302) (Penicillium decumbens).